Consider the following 230-residue polypeptide: MIRSHEHLARKLGIPFRDPGLLRNALTHRSAEGVNNERLEFLGDSVLGFVVTEYLYQRFPSADEGVLSRLRATLVNETSLARIARELELGEYLILGSGELKSGGYRRDSILSDALEAILGAVLRDQGIDACRALILTLFERPLSALSLDDWKKDPKTRLQELMQGRGLPLPVYTLIDQSGLPHDQHFRVRCEVPLAVEPCVGEGSSRKKAEQQAAENMLSRLSDQSRFRV.

The RNase III domain maps to 5 to 127 (HEHLARKLGI…ILGAVLRDQG (123 aa)). A Mg(2+)-binding site is contributed by glutamate 40. Aspartate 44 is a catalytic residue. Mg(2+) is bound by residues aspartate 113 and glutamate 116. Residue glutamate 116 is part of the active site. The 71-residue stretch at 154–224 (DPKTRLQELM…AENMLSRLSD (71 aa)) folds into the DRBM domain. The segment at 202–230 (GEGSSRKKAEQQAAENMLSRLSDQSRFRV) is disordered.

The protein belongs to the ribonuclease III family. As to quaternary structure, homodimer. Mg(2+) is required as a cofactor.

It localises to the cytoplasm. It catalyses the reaction Endonucleolytic cleavage to 5'-phosphomonoester.. Its function is as follows. Digests double-stranded RNA. Involved in the processing of primary rRNA transcript to yield the immediate precursors to the large and small rRNAs (23S and 16S). Processes some mRNAs, and tRNAs when they are encoded in the rRNA operon. Processes pre-crRNA and tracrRNA of type II CRISPR loci if present in the organism. The protein is Ribonuclease 3 of Methylococcus capsulatus (strain ATCC 33009 / NCIMB 11132 / Bath).